We begin with the raw amino-acid sequence, 476 residues long: Aspartyl/glutamyl-tRNA(Asn/Gln) amidotransferase subunit B (476 aa).

It belongs to the GatB/GatE family. GatB subfamily. Heterotrimer of A, B and C subunits.

It carries out the reaction L-glutamyl-tRNA(Gln) + L-glutamine + ATP + H2O = L-glutaminyl-tRNA(Gln) + L-glutamate + ADP + phosphate + H(+). The catalysed reaction is L-aspartyl-tRNA(Asn) + L-glutamine + ATP + H2O = L-asparaginyl-tRNA(Asn) + L-glutamate + ADP + phosphate + 2 H(+). Allows the formation of correctly charged Asn-tRNA(Asn) or Gln-tRNA(Gln) through the transamidation of misacylated Asp-tRNA(Asn) or Glu-tRNA(Gln) in organisms which lack either or both of asparaginyl-tRNA or glutaminyl-tRNA synthetases. The reaction takes place in the presence of glutamine and ATP through an activated phospho-Asp-tRNA(Asn) or phospho-Glu-tRNA(Gln). The chain is Aspartyl/glutamyl-tRNA(Asn/Gln) amidotransferase subunit B from Moorella thermoacetica (strain ATCC 39073 / JCM 9320).